Here is a 573-residue protein sequence, read N- to C-terminus: Adenine deaminase 2 (573 aa).

This sequence belongs to the metallo-dependent hydrolases superfamily. Adenine deaminase family. The cofactor is Mn(2+).

It catalyses the reaction adenine + H2O + H(+) = hypoxanthine + NH4(+). The polypeptide is Adenine deaminase 2 (Shouchella clausii (strain KSM-K16) (Alkalihalobacillus clausii)).